A 159-amino-acid chain; its full sequence is Protein phosphatase 1 regulatory subunit 17 (159 aa).

2 disordered regions span residues 1–79 and 98–127; these read MSTE…HIPP and RIPK…PALH. Basic and acidic residues-rich tracts occupy residues 62 to 73 and 111 to 124; these read SDQKKPRRKDTP and SDME…KDTP. A phosphothreonine; by PKG/PRKG1 mark is found at Thr-72 and Thr-123.

Post-translationally, substrate for cGMP-dependent protein kinase. Phosphorylation of Thr-72 and Thr-123 is required for its phosphatase activity. Phosphorylated by PRKG1 isoform alpha. In terms of tissue distribution, expressed in Purkinje cells of the cerebellum, hippocampus, pons, medulla and eye.

Inhibits phosphatase activities of protein phosphatase 1 (PP1) and protein phosphatase 2A (PP2A) complexes. This is Protein phosphatase 1 regulatory subunit 17 (Ppp1r17) from Mus musculus (Mouse).